We begin with the raw amino-acid sequence, 343 residues long: MTDLESFIRGLPKTDLHMHIEGSIEPQLMLDLAARNGMKLRWDTAEALRGAYQFDNLQSFLDLYFEGCKVLVAEGDFRDVTRAYLRRAHEDGVVRAELFIGPQSFTERGTPLEALMSGVLGAMQEARREHGLSVGLMISVHRHRTEADAMVMLDQIMPWKDQIIAIGMGGAELGNPPAKFARFFKAARDRGFRTTVHAGEEGPAAYVREALELLQVDRIDHGNACLADPDLVRELAMRRIPLTVCPLSNLRLKGVTEMARHPLKTMMAQGLHVTVNTDDPPYFGGYVTENLLACREALDLSREEIVRLVRNGLEAAFVTTEEREILLRQLDDYLARHAVASTS.

The Zn(2+) site is built by His-17, His-19, and His-197. Glu-200 acts as the Proton donor in catalysis. Zn(2+) is bound at residue Asp-278. A substrate-binding site is contributed by Asp-279.

This sequence belongs to the metallo-dependent hydrolases superfamily. Adenosine and AMP deaminases family. Adenine deaminase type 2 subfamily. Zn(2+) is required as a cofactor.

It carries out the reaction adenine + H2O + H(+) = hypoxanthine + NH4(+). Its function is as follows. Catalyzes the hydrolytic deamination of adenine to hypoxanthine. Plays an important role in the purine salvage pathway and in nitrogen catabolism. The sequence is that of Adenine deaminase from Rhodopseudomonas palustris (strain BisB18).